The following is a 142-amino-acid chain: Hemoglobin cathodic subunit alpha (142 aa).

S1 carries the post-translational modification N-acetylserine. A Globin domain is found at 1–142 (SLTAKDKALV…LSSTAADKYR (142 aa)). Residue H59 participates in O2 binding. A heme b-binding site is contributed by H88.

It belongs to the globin family. In terms of assembly, heterotetramer of two alpha chains and two beta chains.

Its function is as follows. Involved in oxygen transport from gills to the various peripheral tissues. This Hoplosternum littorale (Hassar) protein is Hemoglobin cathodic subunit alpha.